Consider the following 156-residue polypeptide: Nuclear cap-binding protein subunit 2 (156 aa).

Serine 2 bears the N-acetylserine mark. Phosphoserine occurs at positions 13 and 18. MRNA-binding positions include tyrosine 20, tyrosine 43, 112 to 116 (RTDWD), 123 to 127 (RQYGR), and 133 to 134 (QV). In terms of domain architecture, RRM spans 40–118 (CTLYVGNLSF…RIIRTDWDAG (79 aa)). Positions 124–156 (QYGRGRSGGQVRDEYRQDYDAGRGGYGKLAQNQ) are disordered. Residues 134–144 (VRDEYRQDYDA) are compositionally biased toward basic and acidic residues. The residue at position 146 (arginine 146) is an Omega-N-methylarginine.

This sequence belongs to the RRM NCBP2 family. Component of the nuclear cap-binding complex (CBC), a heterodimer composed of NCBP1/CBP80 and NCBP2/CBP20 that interacts with m7GpppG-capped RNA. Found in a U snRNA export complex with PHAX/RNUXA, NCBP1/CBP80, NCBP2/CBP20, RAN, XPO1 and m7G-capped RNA. Interacts with PHAX/RNUXA, EIF4G1, HNRNPF, HNRNPH1 and ALYREF/THOC4/ALY. Interacts with SRRT/ARS2 and KPNA3.

The protein localises to the nucleus. It is found in the cytoplasm. In terms of biological role, component of the cap-binding complex (CBC), which binds co-transcriptionally to the 5' cap of pre-mRNAs and is involved in various processes such as pre-mRNA splicing, translation regulation, nonsense-mediated mRNA decay, RNA-mediated gene silencing (RNAi) by microRNAs (miRNAs) and mRNA export. The CBC complex is involved in mRNA export from the nucleus via its interaction with ALYREF/THOC4/ALY, leading to the recruitment of the mRNA export machinery to the 5' end of mRNA and to mRNA export in a 5' to 3' direction through the nuclear pore. The CBC complex is also involved in mediating U snRNA and intronless mRNAs export from the nucleus. The CBC complex is essential for a pioneer round of mRNA translation, before steady state translation when the CBC complex is replaced by cytoplasmic cap-binding protein eIF4E. The pioneer round of mRNA translation mediated by the CBC complex plays a central role in nonsense-mediated mRNA decay (NMD), NMD only taking place in mRNAs bound to the CBC complex, but not on eIF4E-bound mRNAs. The CBC complex enhances NMD in mRNAs containing at least one exon-junction complex (EJC) via its interaction with UPF1, promoting the interaction between UPF1 and UPF2. The CBC complex is also involved in 'failsafe' NMD, which is independent of the EJC complex, while it does not participate in Staufen-mediated mRNA decay (SMD). During cell proliferation, the CBC complex is also involved in microRNAs (miRNAs) biogenesis via its interaction with SRRT/ARS2, thereby being required for miRNA-mediated RNA interference. The CBC complex also acts as a negative regulator of PARN, thereby acting as an inhibitor of mRNA deadenylation. In the CBC complex, NCBP2/CBP20 recognizes and binds capped RNAs (m7GpppG-capped RNA) but requires NCBP1/CBP80 to stabilize the movement of its N-terminal loop and lock the CBC into a high affinity cap-binding state with the cap structure. The conventional cap-binding complex with NCBP2 binds both small nuclear RNA (snRNA) and messenger (mRNA) and is involved in their export from the nucleus. The sequence is that of Nuclear cap-binding protein subunit 2 (NCBP2) from Bos taurus (Bovine).